The following is a 102-amino-acid chain: Small ribosomal subunit protein uS10 (102 aa).

It belongs to the universal ribosomal protein uS10 family. Part of the 30S ribosomal subunit.

Involved in the binding of tRNA to the ribosomes. The protein is Small ribosomal subunit protein uS10 of Methanosphaerula palustris (strain ATCC BAA-1556 / DSM 19958 / E1-9c).